The primary structure comprises 440 residues: C4-dicarboxylate TRAP transporter large permease protein DctM (440 aa).

13 helical membrane-spanning segments follow: residues 4-24, 54-74, 89-109, 112-132, 148-168, 181-201, 230-250, 255-275, 291-311, 318-338, 349-369, 370-390, and 410-430; these read LIIF…SISL, FEIM…HGGV, WHGG…AVSG, PATV…QGFP, ILIP…GMVV, VGEL…FLAF, AAWG…GIFT, AAMS…DLTL, MLLY…HEGI, WMVN…ILLL, IVLI…IDPV, HFGI…PVGL, and VWPW…VPAI.

This sequence belongs to the TRAP transporter large permease family. In terms of assembly, the complex comprises the extracytoplasmic solute receptor protein DctP, and the two transmembrane proteins DctQ and DctM.

The protein localises to the cell inner membrane. Its function is as follows. Part of the tripartite ATP-independent periplasmic (TRAP) transport system DctPQM involved in C4-dicarboxylates uptake. The chain is C4-dicarboxylate TRAP transporter large permease protein DctM from Rhodobacter capsulatus (Rhodopseudomonas capsulata).